Reading from the N-terminus, the 157-residue chain is Endoribonuclease YbeY (157 aa).

Zn(2+) is bound by residues H114, H118, and H124.

This sequence belongs to the endoribonuclease YbeY family. Requires Zn(2+) as cofactor.

It is found in the cytoplasm. Its function is as follows. Single strand-specific metallo-endoribonuclease involved in late-stage 70S ribosome quality control and in maturation of the 3' terminus of the 16S rRNA. This chain is Endoribonuclease YbeY, found in Caulobacter vibrioides (strain ATCC 19089 / CIP 103742 / CB 15) (Caulobacter crescentus).